Here is a 591-residue protein sequence, read N- to C-terminus: Aspartate--tRNA(Asp/Asn) ligase (591 aa).

Glu174 serves as a coordination point for L-aspartate. Residues 198–201 form an aspartate region; sequence QLFK. Arg220 contributes to the L-aspartate binding site. Residues 220-222 and Gln229 contribute to the ATP site; that span reads RDE. Position 450 (His450) interacts with L-aspartate. Glu483 is a binding site for ATP. Arg490 contributes to the L-aspartate binding site. 535–538 contacts ATP; the sequence is GLDR.

This sequence belongs to the class-II aminoacyl-tRNA synthetase family. Type 1 subfamily. As to quaternary structure, homodimer.

The protein resides in the cytoplasm. The enzyme catalyses tRNA(Asx) + L-aspartate + ATP = L-aspartyl-tRNA(Asx) + AMP + diphosphate. Its function is as follows. Aspartyl-tRNA synthetase with relaxed tRNA specificity since it is able to aspartylate not only its cognate tRNA(Asp) but also tRNA(Asn). Reaction proceeds in two steps: L-aspartate is first activated by ATP to form Asp-AMP and then transferred to the acceptor end of tRNA(Asp/Asn). In Pseudomonas fluorescens (strain SBW25), this protein is Aspartate--tRNA(Asp/Asn) ligase.